A 127-amino-acid polypeptide reads, in one-letter code: Small ribosomal subunit protein uS13 (127 aa).

A disordered region spans residues 93–127 (RQGLPVRGQRTRTNGRTRRGRRVTVAGKKKAPAKK). Basic residues predominate over residues 101–127 (QRTRTNGRTRRGRRVTVAGKKKAPAKK).

Belongs to the universal ribosomal protein uS13 family. As to quaternary structure, part of the 30S ribosomal subunit. Forms a loose heterodimer with protein S19. Forms two bridges to the 50S subunit in the 70S ribosome.

Functionally, located at the top of the head of the 30S subunit, it contacts several helices of the 16S rRNA. In the 70S ribosome it contacts the 23S rRNA (bridge B1a) and protein L5 of the 50S subunit (bridge B1b), connecting the 2 subunits; these bridges are implicated in subunit movement. Contacts the tRNAs in the A and P-sites. The sequence is that of Small ribosomal subunit protein uS13 from Crocosphaera subtropica (strain ATCC 51142 / BH68) (Cyanothece sp. (strain ATCC 51142)).